The primary structure comprises 218 residues: GTP cyclohydrolase 1 (218 aa).

Zn(2+)-binding residues include Cys109, His112, and Cys180.

The protein belongs to the GTP cyclohydrolase I family. In terms of assembly, toroid-shaped homodecamer, composed of two pentamers of five dimers.

The catalysed reaction is GTP + H2O = 7,8-dihydroneopterin 3'-triphosphate + formate + H(+). It participates in cofactor biosynthesis; 7,8-dihydroneopterin triphosphate biosynthesis; 7,8-dihydroneopterin triphosphate from GTP: step 1/1. This is GTP cyclohydrolase 1 (folE) from Haemophilus influenzae (strain ATCC 51907 / DSM 11121 / KW20 / Rd).